Here is a 122-residue protein sequence, read N- to C-terminus: UPF0738 protein YjbL (122 aa).

The protein belongs to the UPF0738 family.

This chain is UPF0738 protein YjbL (yjbL), found in Bacillus subtilis (strain 168).